The following is a 98-amino-acid chain: NADH-ubiquinone oxidoreductase chain 4L (98 aa).

Transmembrane regions (helical) follow at residues 1-21, 26-46, and 59-79; these read MTPT…GLTF, LLSA…SMAL, and APML…ALLV.

The protein belongs to the complex I subunit 4L family. As to quaternary structure, core subunit of respiratory chain NADH dehydrogenase (Complex I) which is composed of 45 different subunits.

Its subcellular location is the mitochondrion inner membrane. It catalyses the reaction a ubiquinone + NADH + 5 H(+)(in) = a ubiquinol + NAD(+) + 4 H(+)(out). Core subunit of the mitochondrial membrane respiratory chain NADH dehydrogenase (Complex I) which catalyzes electron transfer from NADH through the respiratory chain, using ubiquinone as an electron acceptor. Part of the enzyme membrane arm which is embedded in the lipid bilayer and involved in proton translocation. The sequence is that of NADH-ubiquinone oxidoreductase chain 4L (mt-nd4l) from Danio rerio (Zebrafish).